We begin with the raw amino-acid sequence, 619 residues long: Chaperone protein HscA homolog (619 aa).

This sequence belongs to the heat shock protein 70 family.

Its function is as follows. Chaperone involved in the maturation of iron-sulfur cluster-containing proteins. Has a low intrinsic ATPase activity which is markedly stimulated by HscB. The protein is Chaperone protein HscA homolog of Acinetobacter baumannii (strain AB0057).